We begin with the raw amino-acid sequence, 206 residues long: 2,3-bisphosphoglycerate-dependent phosphoglycerate mutase (206 aa).

Substrate is bound by residues 9 to 16 (RHGQSEWN), 22 to 23 (TG), arginine 61, 88 to 91 (ERDY), lysine 99, 115 to 116 (RR), and 159 to 160 (GN). Residue histidine 10 is the Tele-phosphohistidine intermediate of the active site. Glutamate 88 functions as the Proton donor/acceptor in the catalytic mechanism.

The protein belongs to the phosphoglycerate mutase family. BPG-dependent PGAM subfamily. Homodimer.

The catalysed reaction is (2R)-2-phosphoglycerate = (2R)-3-phosphoglycerate. It functions in the pathway carbohydrate degradation; glycolysis; pyruvate from D-glyceraldehyde 3-phosphate: step 3/5. Functionally, catalyzes the interconversion of 2-phosphoglycerate and 3-phosphoglycerate. This is 2,3-bisphosphoglycerate-dependent phosphoglycerate mutase from Azorhizobium caulinodans (strain ATCC 43989 / DSM 5975 / JCM 20966 / LMG 6465 / NBRC 14845 / NCIMB 13405 / ORS 571).